Here is a 172-residue protein sequence, read N- to C-terminus: Translationally-controlled tumor protein (172 aa).

The region spanning 1–172 is the TCTP domain; sequence MIIYRDLISH…FKDGLEMEKC (172 aa). A Phosphoserine; by PLK1 modification is found at S46. S53 is subject to Phosphoserine. S64 carries the post-translational modification Phosphoserine; by PLK1. The tract at residues 70–172 is required for reduction of TSC22D1 protein stability; it reads VDIVMNHHLQ…FKDGLEMEKC (103 aa).

This sequence belongs to the TCTP family. In terms of assembly, homodimer. Interacts with STEAP3. Interacts with TSC22D1; interaction results in the destabilization of TSC22D1 protein.

It is found in the cytoplasm. In terms of biological role, involved in calcium binding and microtubule stabilization. Acts as a negative regulator of TSC22D1-mediated apoptosis, via interaction with and destabilization of TSC22D1 protein. The sequence is that of Translationally-controlled tumor protein (TPT1) from Oryctolagus cuniculus (Rabbit).